A 291-amino-acid polypeptide reads, in one-letter code: MIPIQLTVFFMIIYVLESLTIIVQSSLIVAVLGREWLQVRRLMPVDMILISLGISRFCLQWASMLNNFCSYFNLNYVLCNLTITWEFFNILTFWLNSLLTVFYCIKVSSFTHHIFLWLRWRILRLFPWILLGSLMITCVTIIPSAIGNYIQIQLLTMEHLPRNSTVTDKLEKFHQYQFQAHTVALVIPFILFLASTILLMASLTKQIQHHSTGHCNPSMKAHFTALRSLAVLFIVFTSYFLTILITIIGTLFDKRCWLWVWEAFVYAFILMHSTSLMLSSPTLKRILKGKC.

Residue M1 is a topological domain, extracellular. Residues 2 to 22 (IPIQLTVFFMIIYVLESLTII) traverse the membrane as a helical segment. Over 23-41 (VQSSLIVAVLGREWLQVRR) the chain is Cytoplasmic. The chain crosses the membrane as a helical span at residues 42–62 (LMPVDMILISLGISRFCLQWA). At 63-84 (SMLNNFCSYFNLNYVLCNLTIT) the chain is on the extracellular side. N80 carries N-linked (GlcNAc...) asparagine glycosylation. A helical transmembrane segment spans residues 85-105 (WEFFNILTFWLNSLLTVFYCI). Topologically, residues 106-125 (KVSSFTHHIFLWLRWRILRL) are cytoplasmic. Residues 126–146 (FPWILLGSLMITCVTIIPSAI) traverse the membrane as a helical segment. Over 147 to 182 (GNYIQIQLLTMEHLPRNSTVTDKLEKFHQYQFQAHT) the chain is Extracellular. A glycan (N-linked (GlcNAc...) asparagine) is linked at N163. Residues 183 to 203 (VALVIPFILFLASTILLMASL) form a helical membrane-spanning segment. Residues 204-228 (TKQIQHHSTGHCNPSMKAHFTALRS) are Cytoplasmic-facing. Residues 229-249 (LAVLFIVFTSYFLTILITIIG) form a helical membrane-spanning segment. Over 250–257 (TLFDKRCW) the chain is Extracellular. Residues 258-278 (LWVWEAFVYAFILMHSTSLML) traverse the membrane as a helical segment. The Cytoplasmic segment spans residues 279–291 (SSPTLKRILKGKC).

It belongs to the G-protein coupled receptor T2R family. Interacts with RTP3 and RTP4.

It localises to the cell membrane. Its function is as follows. Receptor that may play a role in the perception of bitterness and is gustducin-linked. May play a role in sensing the chemical composition of the gastrointestinal content. The activity of this receptor may stimulate alpha gustducin, mediate PLC-beta-2 activation and lead to the gating of TRPM5. The chain is Taste receptor type 2 member 16 (TAS2R16) from Pan troglodytes (Chimpanzee).